Reading from the N-terminus, the 342-residue chain is MSRVLVVGAGLTGSLCAALLRKEITAPLYLGLWDKGGDIGGRMITASSPHNPRCTADLGAQYITCSPHYVKEHQNFYEELLAHGILKPLTSPIEGMKGKEGDCNFVAPQGFSSVIKYYLKKSGAEVSLKHCVTQIHLKDNKWEVSTDTGSAEQFDLVILTMPAPQILELQGDIVNLISERQREQLKSVSYSSRYALGLFYEVGMKIGVPWSCRYLSSHPCICFISIDNKKRNIESSECGPSVVIQTTVPFGVQHLEASEADVQKLMIQQLETILPGLPQPVATICHKWTYSQVTSSVSDRPGQMTLHLKPFLVCGGDGFTHSNFNGCISSALSVMKVLKRYI.

The N-terminal stretch at 1 to 17 (MSRVLVVGAGLTGSLCA) is a signal peptide. FAD is bound by residues Thr12, Arg42, and 61 to 62 (QY).

The protein belongs to the renalase family. Requires FAD as cofactor. In terms of tissue distribution, expressed predominantly in kidney and testis with lower levels in liver, heart and embryo and weak expression in brain and skeletal muscle.

It is found in the secreted. The catalysed reaction is 1,2-dihydro-beta-NAD + O2 + H(+) = H2O2 + NAD(+). The enzyme catalyses 1,2-dihydro-beta-NADP + O2 + H(+) = H2O2 + NADP(+). It catalyses the reaction 1,6-dihydro-beta-NADP + O2 + H(+) = H2O2 + NADP(+). It carries out the reaction 1,6-dihydro-beta-NAD + O2 + H(+) = H2O2 + NAD(+). Its function is as follows. Catalyzes the oxidation of the less abundant 1,2-dihydro-beta-NAD(P) and 1,6-dihydro-beta-NAD(P) to form beta-NAD(P)(+). The enzyme hormone is secreted by the kidney, and circulates in blood and modulates cardiac function and systemic blood pressure. Lowers blood pressure in vivo by decreasing cardiac contractility and heart rate and preventing a compensatory increase in peripheral vascular tone, suggesting a causal link to the increased plasma catecholamine and heightened cardiovascular risk. High concentrations of catecholamines activate plasma renalase and promotes its secretion and synthesis. This is Renalase from Mus musculus (Mouse).